Here is a 526-residue protein sequence, read N- to C-terminus: Medium/long-chain-fatty-acid--[acyl-carrier-protein] ligase MbtM (526 aa).

N6-acetyllysine; by Pat occurs at positions 260 and 511.

It belongs to the ATP-dependent AMP-binding enzyme family. Acetylated on Lys-511 and Lys-260 by Pat. Lys-511 is the major acetylation site. Acetylation results in the inactivation of the enzyme.

It catalyses the reaction a long-chain fatty acid + holo-[ACP] + ATP = a long-chain fatty acyl-[ACP] + AMP + diphosphate. The catalysed reaction is a medium-chain fatty acid + holo-[ACP] + ATP = a medium-chain fatty acyl-[ACP] + AMP + diphosphate. The enzyme catalyses hexadecanoate + holo-[ACP] + ATP = hexadecanoyl-[ACP] + AMP + diphosphate. It carries out the reaction hexadecanoate + ATP + H(+) = hexadecanoyl-AMP + diphosphate. It catalyses the reaction hexadecanoyl-AMP + holo-[ACP] = hexadecanoyl-[ACP] + AMP + H(+). The catalysed reaction is dodecanoate + holo-[ACP] + ATP = dodecanoyl-[ACP] + AMP + diphosphate. The enzyme catalyses dodecanoate + ATP + H(+) = dodecanoyl-AMP + diphosphate. It carries out the reaction dodecanoyl-AMP + holo-[ACP] = dodecanoyl-[ACP] + AMP + H(+). The protein operates within siderophore biosynthesis; mycobactin biosynthesis. Reversibly inactivated by post-translational acetylation by Pat in a cAMP-dependent manner and reactivated by Sir2 deacylase. Functionally, activates lipidic moieties required for mycobactin biosynthesis. Converts medium- to long-chain aliphatic fatty acids into acyl adenylate, which is further transferred on to the phosphopantetheine arm of the carrier protein MbtL. Shows a strong preference for palmitic acid (C16) and cannot use short-chain fatty acids. Proceeds via a Bi Uni Uni Bi ping-pong mechanism. During the first half-reaction (adenylation), fatty acid binds first to the free enzyme, followed by ATP and the release of pyrophosphate to form the adenylate intermediate. During the second half-reaction (ligation), holo-MbtL binds to the enzyme followed by the release of products AMP and acylated MbtL. The chain is Medium/long-chain-fatty-acid--[acyl-carrier-protein] ligase MbtM from Mycolicibacterium smegmatis (strain ATCC 700084 / mc(2)155) (Mycobacterium smegmatis).